Here is a 357-residue protein sequence, read N- to C-terminus: UDP-N-acetylglucosamine--N-acetylmuramyl-(pentapeptide) pyrophosphoryl-undecaprenol N-acetylglucosamine transferase (357 aa).

UDP-N-acetyl-alpha-D-glucosamine is bound by residues 14–16, Asn125, Ser190, and Gln290; that span reads SGG.

The protein belongs to the glycosyltransferase 28 family. MurG subfamily.

The protein localises to the cell inner membrane. It catalyses the reaction di-trans,octa-cis-undecaprenyl diphospho-N-acetyl-alpha-D-muramoyl-L-alanyl-D-glutamyl-meso-2,6-diaminopimeloyl-D-alanyl-D-alanine + UDP-N-acetyl-alpha-D-glucosamine = di-trans,octa-cis-undecaprenyl diphospho-[N-acetyl-alpha-D-glucosaminyl-(1-&gt;4)]-N-acetyl-alpha-D-muramoyl-L-alanyl-D-glutamyl-meso-2,6-diaminopimeloyl-D-alanyl-D-alanine + UDP + H(+). Its pathway is cell wall biogenesis; peptidoglycan biosynthesis. Functionally, cell wall formation. Catalyzes the transfer of a GlcNAc subunit on undecaprenyl-pyrophosphoryl-MurNAc-pentapeptide (lipid intermediate I) to form undecaprenyl-pyrophosphoryl-MurNAc-(pentapeptide)GlcNAc (lipid intermediate II). The polypeptide is UDP-N-acetylglucosamine--N-acetylmuramyl-(pentapeptide) pyrophosphoryl-undecaprenol N-acetylglucosamine transferase (Chlamydia felis (strain Fe/C-56) (Chlamydophila felis)).